Consider the following 800-residue polypeptide: Receptor-like protein 47 (800 aa).

Positions 1-31 are cleaved as a signal peptide; that stretch reads MMHSSSVRRMITVKWSLCLIFCLTNSILVSA. At 32-759 the chain is on the extracellular side; sequence KHLCLPDQKD…QDEDKEEEDQ (728 aa). 2 N-linked (GlcNAc...) asparagine glycosylation sites follow: Asn-66 and Asn-102. LRR repeat units follow at residues 109–131, 133–156, 157–179, 190–213, 214–238, 240–262, 263–288, 294–311, 312–334, 335–358, 360–383, 385–406, 407–430, 431–453, 455–477, 479–500, 502–523, 524–550, 551–574, 621–645, 646–669, 670–693, and 695–718; these read QHLQ…SIGN, KRLK…LGNL, SYLT…SMGN, LSSV…NMSS, LSKL…LFMI, SLIL…NISS, PSNL…IFSP, YLDV…VSLP, SPIE…LRNQ, TSLE…LWSL, ELRY…VIQG, RELL…LLPV, VSMN…ICEL, DNLR…CFEN, HLYV…AISH, LQSF…LINC, DIEF…WLEL, LPNL…SLSF, SRLR…YFVG, FTIY…IGLL, KEVI…LSNL, SNLQ…LGKL, and FLEW…QIQT. Asn-155 carries N-linked (GlcNAc...) asparagine glycosylation. Residue Asn-210 is glycosylated (N-linked (GlcNAc...) asparagine). N-linked (GlcNAc...) asparagine glycosylation is present at Asn-259. Asn-323 and Asn-333 each carry an N-linked (GlcNAc...) asparagine glycan. N-linked (GlcNAc...) asparagine glycosylation is present at Asn-365. 4 N-linked (GlcNAc...) asparagine glycosylation sites follow: Asn-442, Asn-465, Asn-499, and Asn-514. Asn-668 is a glycosylation site (N-linked (GlcNAc...) asparagine). Asn-700 carries an N-linked (GlcNAc...) asparagine glycan. A helical membrane pass occupies residues 760–780; that stretch reads VFSWIAAAIGYVPGVVCGLTI. At 781–800 the chain is on the cytoplasmic side; the sequence is GHILVSHKRDWFMRIVSFFT.

It belongs to the RLP family.

It is found in the cell membrane. This chain is Receptor-like protein 47, found in Arabidopsis thaliana (Mouse-ear cress).